A 437-amino-acid chain; its full sequence is Isthmin-2 (437 aa).

Positions 1–25 (MLRARKGLWVLLSVLLAFWIERAIS) are cleaved as a signal peptide. A disordered region spans residues 156-191 (DSGEDGTGQAEDEEDDYDYDSGEPIPSGLGKTDGDW). Acidic residues predominate over residues 165-176 (AEDEEDDYDYDS). Positions 197 to 242 (EEKEEEWSTWSPCSVTCGHGNQTRSRSCGDFCTSTESQSCDLVPCP) constitute a TSP type-1 domain. Cystine bridges form between Cys209/Cys236, Cys213/Cys241, and Cys224/Cys228. Asn217 is a glycosylation site (N-linked (GlcNAc...) asparagine). 2 N-linked (GlcNAc...) asparagine glycosylation sites follow: Asn258 and Asn349. In terms of domain architecture, AMOP spans 262 to 425 (PYGTDVGSCE…LHCMENPQQD (164 aa)).

Belongs to the isthmin family.

It is found in the secreted. In Danio rerio (Zebrafish), this protein is Isthmin-2 (ism2).